The primary structure comprises 61 residues: Probable tautomerase LL0574 (61 aa).

Residue proline 2 is the Proton acceptor; via imino nitrogen of the active site.

It belongs to the 4-oxalocrotonate tautomerase family.

The polypeptide is Probable tautomerase LL0574 (Lactococcus lactis subsp. lactis (strain IL1403) (Streptococcus lactis)).